A 643-amino-acid chain; its full sequence is UvrABC system protein C (643 aa).

Residues 25–104 enclose the GIY-YIG domain; it reads AEPGVYFMRD…IKQHQPHFNV (80 aa). Residues 214–249 enclose the UVR domain; it reads SELVELLEAQMLQAAENLEFEKAAKIRDQIRGLEGL.

It belongs to the UvrC family. As to quaternary structure, interacts with UvrB in an incision complex.

It localises to the cytoplasm. Its function is as follows. The UvrABC repair system catalyzes the recognition and processing of DNA lesions. UvrC both incises the 5' and 3' sides of the lesion. The N-terminal half is responsible for the 3' incision and the C-terminal half is responsible for the 5' incision. The polypeptide is UvrABC system protein C (Synechococcus elongatus (strain ATCC 33912 / PCC 7942 / FACHB-805) (Anacystis nidulans R2)).